A 63-amino-acid chain; its full sequence is Large ribosomal subunit protein uL29 (63 aa).

The protein belongs to the universal ribosomal protein uL29 family.

The chain is Large ribosomal subunit protein uL29 from Shewanella denitrificans (strain OS217 / ATCC BAA-1090 / DSM 15013).